The sequence spans 339 residues: MTVAKSTCASVSTKPAVGKPTNGIATYSPAYTIVPTYECFNRCTYCNFRTDPGESSWMTLSAAEDIFQRLQNEQVCEILILSGEVHPHSPKRQAWFQRIYDLCKLALTSGFLPHTNAGPLSFAEMQELKSVNVSMGLMLEQLTPKLLETVHRHAPSKLPELRLQQLEWAGDLQIPFTTGLLLGIGEGIDDCWETLETISKLHQRYHHIQEVILQPHSPGNQQTFDAPAFNPHQLPEVIAKARQILPPDITIQIPPNLVQDEQWLVACVEAGARDLGGIGPKDEVNPDYPHLQAEELREILQPVGWELVPRLPVYPQFDGWLSKELQASVRRWRELVIYF.

The Radical SAM core domain maps to 25-256; sequence ATYSPAYTIV…PDITIQIPPN (232 aa). Positions 39, 43, and 46 each coordinate [4Fe-4S] cluster.

This sequence belongs to the radical SAM superfamily. CofG family. In terms of assembly, consists of two subunits, CofG and CofH. [4Fe-4S] cluster is required as a cofactor.

It catalyses the reaction 5-amino-5-(4-hydroxybenzyl)-6-(D-ribitylimino)-5,6-dihydrouracil + S-adenosyl-L-methionine = 7,8-didemethyl-8-hydroxy-5-deazariboflavin + 5'-deoxyadenosine + L-methionine + NH4(+) + H(+). It participates in cofactor biosynthesis; coenzyme F0 biosynthesis. Its function is as follows. Catalyzes the radical-mediated synthesis of 7,8-didemethyl-8-hydroxy-5-deazariboflavin from 5-amino-5-(4-hydroxybenzyl)-6-(D-ribitylimino)-5,6-dihydrouracil. The sequence is that of 7,8-didemethyl-8-hydroxy-5-deazariboflavin synthase from Nostoc sp. (strain PCC 7120 / SAG 25.82 / UTEX 2576).